Here is a 211-residue protein sequence, read N- to C-terminus: Uracil phosphoribosyltransferase (211 aa).

5-phospho-alpha-D-ribose 1-diphosphate is bound by residues Arg-81, Arg-106, and 133 to 141; that span reads DPMLATGNS. Residues Ile-196 and 201–203 each bind uracil; that span reads GDA. Position 202 (Asp-202) interacts with 5-phospho-alpha-D-ribose 1-diphosphate.

This sequence belongs to the UPRTase family. The cofactor is Mg(2+).

The catalysed reaction is UMP + diphosphate = 5-phospho-alpha-D-ribose 1-diphosphate + uracil. Its pathway is pyrimidine metabolism; UMP biosynthesis via salvage pathway; UMP from uracil: step 1/1. Its activity is regulated as follows. Allosterically activated by GTP. Catalyzes the conversion of uracil and 5-phospho-alpha-D-ribose 1-diphosphate (PRPP) to UMP and diphosphate. This chain is Uracil phosphoribosyltransferase, found in Paracoccus denitrificans (strain Pd 1222).